We begin with the raw amino-acid sequence, 216 residues long: Imidazole glycerol phosphate synthase subunit HisH (216 aa).

The Glutamine amidotransferase type-1 domain occupies 5-213; it reads RLAVIDYDAG…VEFVARRLPA (209 aa). Catalysis depends on Cys83, which acts as the Nucleophile. Residues His188 and Glu190 contribute to the active site.

As to quaternary structure, heterodimer of HisH and HisF.

The protein localises to the cytoplasm. It catalyses the reaction 5-[(5-phospho-1-deoxy-D-ribulos-1-ylimino)methylamino]-1-(5-phospho-beta-D-ribosyl)imidazole-4-carboxamide + L-glutamine = D-erythro-1-(imidazol-4-yl)glycerol 3-phosphate + 5-amino-1-(5-phospho-beta-D-ribosyl)imidazole-4-carboxamide + L-glutamate + H(+). The catalysed reaction is L-glutamine + H2O = L-glutamate + NH4(+). The protein operates within amino-acid biosynthesis; L-histidine biosynthesis; L-histidine from 5-phospho-alpha-D-ribose 1-diphosphate: step 5/9. In terms of biological role, IGPS catalyzes the conversion of PRFAR and glutamine to IGP, AICAR and glutamate. The HisH subunit catalyzes the hydrolysis of glutamine to glutamate and ammonia as part of the synthesis of IGP and AICAR. The resulting ammonia molecule is channeled to the active site of HisF. The polypeptide is Imidazole glycerol phosphate synthase subunit HisH (Synechococcus sp. (strain JA-3-3Ab) (Cyanobacteria bacterium Yellowstone A-Prime)).